The following is a 313-amino-acid chain: Intracellular endo-alpha-(1-&gt;5)-L-arabinanase (313 aa).

Asp-27 functions as the Proton acceptor in the catalytic mechanism. Substrate-binding positions include Asp-27, Gly-105, 144-147 (NAID), and 164-166 (SFW). Glu-201 serves as the catalytic Proton donor. Ca(2+) is bound at residue His-271.

This sequence belongs to the glycosyl hydrolase 43 family. In terms of assembly, monomer. Ca(2+) is required as a cofactor.

It localises to the cytoplasm. It carries out the reaction Endohydrolysis of (1-&gt;5)-alpha-arabinofuranosidic linkages in (1-&gt;5)-arabinans.. It participates in glycan metabolism; L-arabinan degradation. Involved in the degradation of arabinan and is a key enzyme in the complete degradation of the plant cell wall. Catalyzes the cleavage of endo alpha-(1-&gt;5)-L-arabinofuranosyl residues in debranched arabinan. The polypeptide is Intracellular endo-alpha-(1-&gt;5)-L-arabinanase (abn-ts) (Geobacillus thermodenitrificans).